A 78-amino-acid polypeptide reads, in one-letter code: Defensin-like protein 281 (78 aa).

The signal sequence occupies residues 1-23 (MASTKYLVLLFICLSVLLTPGLG). Cystine bridges form between Cys37-Cys60, Cys46-Cys72, and Cys50-Cys74.

The protein belongs to the DEFL family.

It localises to the secreted. This Arabidopsis thaliana (Mouse-ear cress) protein is Defensin-like protein 281.